Consider the following 258-residue polypeptide: Tryptophan synthase alpha chain (258 aa).

Catalysis depends on proton acceptor residues Glu-47 and Asp-58.

It belongs to the TrpA family. Tetramer of two alpha and two beta chains.

The enzyme catalyses (1S,2R)-1-C-(indol-3-yl)glycerol 3-phosphate + L-serine = D-glyceraldehyde 3-phosphate + L-tryptophan + H2O. It functions in the pathway amino-acid biosynthesis; L-tryptophan biosynthesis; L-tryptophan from chorismate: step 5/5. Its function is as follows. The alpha subunit is responsible for the aldol cleavage of indoleglycerol phosphate to indole and glyceraldehyde 3-phosphate. The sequence is that of Tryptophan synthase alpha chain from Bacillus cereus (strain B4264).